We begin with the raw amino-acid sequence, 78 residues long: Beta-defensin 105A (78 aa).

The signal sequence occupies residues Met1 to Ala27. Cystine bridges form between Cys46–Cys74, Cys53–Cys67, and Cys57–Cys73.

The protein belongs to the beta-defensin family.

The protein resides in the secreted. Has antimicrobial activity. This is Beta-defensin 105A (DEFB105A) from Hylobates lar (Lar gibbon).